The primary structure comprises 297 residues: GATA transcription factor 24 (297 aa).

The Tify domain maps to 73 to 108; that stretch reads GIENGDQLTLSFQGQVYVFDRVSPEKVQAVLLLLGG. Residues 143 to 185 form the CCT domain; the sequence is RLASLLRFREKRKGRNFDKTIRYTVRKEVALRMQRKKGQFTSA. Residues 178–203 form a disordered region; the sequence is KKGQFTSAKSSNDDSGSTGSDWGSNQ. Positions 190–201 are enriched in low complexity; that stretch reads DDSGSTGSDWGS. The GATA-type zinc-finger motif lies at 213–269; that stretch reads QKPEVLCRHCGTSEKSTPMMRRGPDGPRTLCNACGLMWANKGTLRDLSKVPPPQTPQ.

It belongs to the type IV zinc-finger family. Class C subfamily. As to expression, predominantly expressed in shoot apices, inflorescences and roots.

The protein localises to the nucleus. Its function is as follows. Transcriptional activator that specifically binds 5'-GATA-3' or 5'-GAT-3' motifs within gene promoters. This chain is GATA transcription factor 24 (GATA24), found in Arabidopsis thaliana (Mouse-ear cress).